A 129-amino-acid polypeptide reads, in one-letter code: Phosphoribosyl-AMP cyclohydrolase (129 aa).

Residue Asp-78 coordinates Mg(2+). Cys-79 contributes to the Zn(2+) binding site. Mg(2+) contacts are provided by Asp-80 and Asp-82. The Zn(2+) site is built by Cys-96 and Cys-103.

It belongs to the PRA-CH family. As to quaternary structure, homodimer. Mg(2+) serves as cofactor. Requires Zn(2+) as cofactor.

The protein localises to the cytoplasm. The catalysed reaction is 1-(5-phospho-beta-D-ribosyl)-5'-AMP + H2O = 1-(5-phospho-beta-D-ribosyl)-5-[(5-phospho-beta-D-ribosylamino)methylideneamino]imidazole-4-carboxamide. The protein operates within amino-acid biosynthesis; L-histidine biosynthesis; L-histidine from 5-phospho-alpha-D-ribose 1-diphosphate: step 3/9. In terms of biological role, catalyzes the hydrolysis of the adenine ring of phosphoribosyl-AMP. The chain is Phosphoribosyl-AMP cyclohydrolase from Nitrosomonas europaea (strain ATCC 19718 / CIP 103999 / KCTC 2705 / NBRC 14298).